A 125-amino-acid polypeptide reads, in one-letter code: Methylglyoxal synthase (125 aa).

The MGS-like domain occupies 1–125 (MTQRLRIALI…TAEKLVRALD (125 aa)). Substrate-binding positions include histidine 12, lysine 16, 38–41 (TGTT), and 59–60 (SG). The active-site Proton donor/acceptor is aspartate 65. Histidine 92 contacts substrate.

The protein belongs to the methylglyoxal synthase family.

It carries out the reaction dihydroxyacetone phosphate = methylglyoxal + phosphate. Functionally, catalyzes the formation of methylglyoxal from dihydroxyacetone phosphate. This chain is Methylglyoxal synthase, found in Brucella abortus (strain S19).